We begin with the raw amino-acid sequence, 466 residues long: Metaxin-1 (466 aa).

Positions 1–19 are enriched in low complexity; sequence MLLGGPPRSPRSGTSPKGP. Residues 1–133 are disordered; that stretch reads MLLGGPPRSP…AVAGGGPRQG (133 aa). A compositionally biased stretch (polar residues) spans 20 to 36; that stretch reads WSSTGHVQFGKSPQTWP. A compositionally biased stretch (low complexity) spans 90-110; it reads ARGPVPRSSAASRARRSLASP. Residues K187, K190, K227, and K317 each participate in a glycyl lysine isopeptide (Lys-Gly) (interchain with G-Cter in ubiquitin) cross-link. A helical membrane pass occupies residues 421-441; sequence ILSVLAGLAAMVGYALLSGIV.

Belongs to the metaxin family. Interacts with MTX2/metaxin-2. Associates with the mitochondrial contact site and cristae organizing system (MICOS) complex, composed of at least MICOS10/MIC10, CHCHD3/MIC19, CHCHD6/MIC25, APOOL/MIC27, IMMT/MIC60, APOO/MIC23/MIC26 and QIL1/MIC13. This complex was also known under the names MINOS or MitOS complex. The MICOS complex associates with mitochondrial outer membrane proteins SAMM50, MTX1 and MTX2 (together described as components of the mitochondrial outer membrane sorting assembly machinery (SAM) complex) and DNAJC11, mitochondrial inner membrane protein TMEM11 and with HSPA9. The MICOS and SAM complexes together with DNAJC11 are part of a large protein complex spanning both membranes termed the mitochondrial intermembrane space bridging (MIB) complex. Interacts with ARMC1. In terms of processing, ubiquitinated by PRKN during mitophagy, leading to its degradation and enhancement of mitophagy. Deubiquitinated by USP30.

It is found in the membrane. The protein localises to the mitochondrion outer membrane. In terms of biological role, involved in transport of proteins into the mitochondrion. Essential for embryonic development. The sequence is that of Metaxin-1 (MTX1) from Homo sapiens (Human).